Reading from the N-terminus, the 254-residue chain is MSNTTMATSTILLFLLAGLAAAHGDGDTTIRLPSDGAKASRPRAAKPWDCCDNIEISRLMIYPPLYRCNDEVKQCAAACKECVEAPGGDFNGGAFVCSDWFSTVDPGPKCTAALDGLSMERPWKCCDNIKRLPTKPDPPQWRCNDELEPSQCTAACKSCREAPGPFPGKLICEDIYWGADPGPLCTPRPWGDCCDKAFCNKMNPPTCRCMDEVKECADACKDCQRVESSEPPRYVCKDRFTGHPGPVCKPRAEN.

An N-terminal signal peptide occupies residues 1 to 22; it reads MSNTTMATSTILLFLLAGLAAA. Residues 23-118 constitute a propeptide that is removed on maturation; it reads HGDGDTTIRL…KCTAALDGLS (96 aa). 3 repeats span residues 46 to 120, 121 to 187, and 188 to 251; these read KPWD…LSME, RPWK…LCTP, and RPWG…CKPR. 10 cysteine pairs are disulfide-bonded: cysteine 51–cysteine 248, cysteine 125–cysteine 185, cysteine 126–cysteine 143, cysteine 152–cysteine 159, cysteine 156–cysteine 172, cysteine 193–cysteine 248, cysteine 194–cysteine 209, cysteine 199–cysteine 207, cysteine 216–cysteine 223, and cysteine 220–cysteine 236. Positions 252–254 are excised as a propeptide; it reads AEN.

This sequence belongs to the Bowman-Birk serine protease inhibitor family. Expressed in roots, leaves and flowers.

The protein is Bowman-Birk type bran trypsin inhibitor (RBBI3.3) of Oryza sativa subsp. indica (Rice).